The following is an 802-amino-acid chain: ATP-dependent zinc metalloprotease FTSH 3, mitochondrial (802 aa).

The transit peptide at 1-21 (MSLSSLSRALARSARSSRQRQ) directs the protein to the mitochondrion. The segment covering 1–23 (MSLSSLSRALARSARSSRQRQGS) has biased composition (low complexity). Disordered stretches follow at residues 1-33 (MSLS…GLRA) and 85-120 (DKSK…SGDQ). The segment covering 85–113 (DKSKKNHGKHSEEENKGKGDESDKSDSKK) has biased composition (basic and acidic residues). The chain crosses the membrane as a helical span at residues 133-153 (MIAPLFLFGLLLLSASASSSE). 360-367 (GPPGTGKT) provides a ligand contact to ATP. Residue His-585 coordinates Zn(2+). The active site involves Glu-586. Residues His-589 and Asp-661 each contribute to the Zn(2+) site. Residues 773–802 (KQGFQDEDSNRNAELSNADGASSLGEAVAS) are disordered.

It in the N-terminal section; belongs to the AAA ATPase family. This sequence in the C-terminal section; belongs to the peptidase M41 family. The cofactor is Zn(2+).

It localises to the mitochondrion inner membrane. In terms of biological role, probable ATP-dependent zinc metallopeptidase. The sequence is that of ATP-dependent zinc metalloprotease FTSH 3, mitochondrial (FTSH3) from Oryza sativa subsp. japonica (Rice).